Reading from the N-terminus, the 350-residue chain is Ion-translocating oxidoreductase complex subunit D (350 aa).

A run of 3 helical transmembrane segments spans residues 36–56, 89–109, and 124–144; these read CYFFGWGTLIQIALAIAIAVA, IPALAPWWIAAIGVIFAILVV, and AMAAYVMLLISFPMQMTTWVA. At Thr185 the chain carries FMN phosphoryl threonine. Helical transmembrane passes span 212–232, 239–259, 265–285, 298–318, and 319–339; these read GFGIGWALINLAYLAGGLVML, WQISTAILASLFVCASIGYLL, MGPLLHLFSGATMLAAFFIAT, LIFGSLIGLLVYLIRSFCGYP, and DAFAFAVLLANLCAPFIDYYV.

The protein belongs to the NqrB/RnfD family. The complex is composed of six subunits: RnfA, RnfB, RnfC, RnfD, RnfE and RnfG. FMN serves as cofactor.

The protein localises to the cell inner membrane. In terms of biological role, part of a membrane-bound complex that couples electron transfer with translocation of ions across the membrane. The protein is Ion-translocating oxidoreductase complex subunit D of Shewanella loihica (strain ATCC BAA-1088 / PV-4).